We begin with the raw amino-acid sequence, 88 residues long: Centromere protein W (88 aa).

Belongs to the CENP-W/WIP1 family. Heterodimer with CENPT; this dimer coassembles with CENPS-CENPX heterodimers at centromeres to form the tetrameric CENP-T-W-S-X complex, which is a subcomplex of the large constitutive centromere-associated network (CCAN, also known as the interphase centromere complex or ICEN). Interacts with NPM1. Highly expressed in ovary, liver, lung and pancreas and to a lower extent in breast and gastrointestinal tract cancers; such as those of the colon, rectum and stomach. Overexpressed in high grade breast invasive tumors. Expressed in many cancer cell types.

The protein localises to the nucleus. It localises to the chromosome. The protein resides in the centromere. It is found in the kinetochore. Its subcellular location is the nucleus matrix. The protein localises to the nucleolus. Its function is as follows. Component of the CENPA-NAC (nucleosome-associated) complex, a complex that plays a central role in assembly of kinetochore proteins, mitotic progression and chromosome segregation. The CENPA-NAC complex recruits the CENPA-CAD (nucleosome distal) complex and may be involved in incorporation of newly synthesized CENPA into centromeres. Part of a nucleosome-associated complex that binds specifically to histone H3-containing nucleosomes at the centromere, as opposed to nucleosomes containing CENPA. Component of the heterotetrameric CENP-T-W-S-X complex that binds and supercoils DNA, and plays an important role in kinetochore assembly. CENPW has a fundamental role in kinetochore assembly and function. It is one of the inner kinetochore proteins, with most further proteins binding downstream. Required for normal chromosome organization and normal progress through mitosis. This is Centromere protein W (CENPW) from Homo sapiens (Human).